Consider the following 87-residue polypeptide: Cytochrome c oxidase subunit 6B1 (87 aa).

The CHCH domain maps to 28–74; that stretch reads TRNCWQNYLDFHRCQKAMTTKGGNVSVCEWYQRVYQSLCPTSWVTDW. A Cx9C motif motif is present at residues 31-41; the sequence is CWQNYLDFHRC. Intrachain disulfides connect Cys31/Cys66 and Cys41/Cys55. A Cx10C motif motif is present at residues 55–66; it reads CEWYQRVYQSLC.

It is found in the mitochondrion intermembrane space. Connects the two COX monomers into the physiological dimeric form. In Macaca fascicularis (Crab-eating macaque), this protein is Cytochrome c oxidase subunit 6B1 (COX6B1).